Here is a 317-residue protein sequence, read N- to C-terminus: Olfactory receptor 5K16 (317 aa).

At 1-28 (MEKTNHSLTTQFILVGFSDHPDLKTPLF) the chain is on the extracellular side. Residue N5 is glycosylated (N-linked (GlcNAc...) asparagine). A helical membrane pass occupies residues 29-49 (LLFSVIYLVTMVGNLGLVAVI). Residues 50–56 (YLEPRLH) lie on the Cytoplasmic side of the membrane. Residues 57 to 77 (TPMYIFLGNLALMDSCCSCAI) traverse the membrane as a helical segment. The Extracellular segment spans residues 78-93 (TPKILENFFSVDRRIS). The chain crosses the membrane as a helical span at residues 94-114 (LYECMAQFYFLCLAETADCFL). The cysteines at positions 97 and 189 are disulfide-linked. The Cytoplasmic segment spans residues 115–144 (LAAMAYDRYVAICNPLQYHSMMSKKLSIQM). The chain crosses the membrane as a helical span at residues 145 to 165 (SIGTFITSNLHSLIHVGCLLR). The Extracellular segment spans residues 166-198 (LTFCKSNRIDHFFCDILPLYRLSCTDPFINELM). A helical transmembrane segment spans residues 199-219 (IYIFSMPIQVFTITTVLVSYF). Topologically, residues 220–239 (CILLTIFKMKSKDGRGKAFS) are cytoplasmic. A helical membrane pass occupies residues 240–259 (TCASHFFSVSIFYVCLLMYI). The Extracellular portion of the chain corresponds to 260-268 (RPFDEGNKD). A helical transmembrane segment spans residues 269-289 (IPVAVFYTIIIPLLNPFIYSL). The Cytoplasmic segment spans residues 290 to 317 (RNKEVVNAVKKVMKTHSIFKNASASMAR).

Belongs to the G-protein coupled receptor 1 family.

The protein resides in the cell membrane. Potential odorant receptor. This chain is Olfactory receptor 5K16, found in Mus musculus (Mouse).